We begin with the raw amino-acid sequence, 348 residues long: EGF-like domain-containing protein 1 (348 aa).

The first 19 residues, 1 to 19 (MFYLSTFMTIVISLSLVSC), serve as a signal peptide directing secretion. The region spanning 60 to 92 (TGSNCTVTCQNNGKCYDGSKCLCSSDYTGDLCE) is the EGF-like domain. Cystine bridges form between Cys-64–Cys-74, Cys-68–Cys-80, and Cys-82–Cys-91. Positions 99 to 342 (RCTLDAVVFE…PTCAAPXVGQ (244 aa)) constitute a ZP domain.

Prismatic layer of shell (at protein level). Expressed primarily in the mantle with highest level in the mantle edge and lower level in the mantle pallium.

The protein localises to the secreted. This chain is EGF-like domain-containing protein 1, found in Pinctada maxima (Silver-lipped pearl oyster).